We begin with the raw amino-acid sequence, 380 residues long: Genome polyprotein (380 aa).

Disordered regions lie at residues 54–154 (GTVD…TGKI) and 349–380 (GNVGETQENTERHTAGDVSRNMHSLLGVQQHH). Low complexity predominate over residues 67-84 (QGTTPPATGSGAKPATSG). 2 stretches are compositionally biased toward gly residues: residues 85–99 (AGSGSGTGAGTGVTG) and 106–123 (SGTGTGSGATGGQSGSGS). Over residues 129–140 (NTGSAGTNATGG) the composition is skewed to low complexity.

It belongs to the potyviridae genome polyprotein family. Post-translationally, genome polyprotein of potyviruses undergoes post-translational proteolytic processing by the main proteinase NIa-pro resulting in the production of at least ten individual proteins. The P1 proteinase and the HC-pro cleave only their respective C-termini autocatalytically. 6K1 is essential for proper proteolytic separation of P3 from CI.

Its subcellular location is the virion. The catalysed reaction is RNA(n) + a ribonucleoside 5'-triphosphate = RNA(n+1) + diphosphate. In terms of biological role, an RNA-dependent RNA polymerase that plays an essential role in the virus replication. Its function is as follows. Involved in aphid transmission, cell-to-cell and systemis movement, encapsidation of the viral RNA and in the regulation of viral RNA amplification. This is Genome polyprotein from Sorghum halepense (Johnson grass).